The sequence spans 565 residues: Sulfite reductase [NADPH] hemoprotein beta-component (565 aa).

[4Fe-4S] cluster-binding residues include Cys429, Cys435, Cys474, and Cys478. Cys478 lines the siroheme pocket.

Belongs to the nitrite and sulfite reductase 4Fe-4S domain family. In terms of assembly, alpha(8)-beta(8). The alpha component is a flavoprotein, the beta component is a hemoprotein. Siroheme serves as cofactor. [4Fe-4S] cluster is required as a cofactor.

It catalyses the reaction hydrogen sulfide + 3 NADP(+) + 3 H2O = sulfite + 3 NADPH + 4 H(+). It functions in the pathway sulfur metabolism; hydrogen sulfide biosynthesis; hydrogen sulfide from sulfite (NADPH route): step 1/1. Component of the sulfite reductase complex that catalyzes the 6-electron reduction of sulfite to sulfide. This is one of several activities required for the biosynthesis of L-cysteine from sulfate. The sequence is that of Sulfite reductase [NADPH] hemoprotein beta-component from Shewanella sp. (strain MR-4).